The primary structure comprises 220 residues: Redox-sensing transcriptional repressor Rex (220 aa).

Residues 16–55 (MYVQVLETLKREGSQVVSSELLARTCSVNPSQIRKDLAYF) constitute a DNA-binding region (H-T-H motif). Residue 90 to 95 (GIGNLG) coordinates NAD(+).

It belongs to the transcriptional regulatory Rex family. Homodimer.

The protein localises to the cytoplasm. Its function is as follows. Modulates transcription in response to changes in cellular NADH/NAD(+) redox state. In Solidesulfovibrio magneticus (strain ATCC 700980 / DSM 13731 / RS-1) (Desulfovibrio magneticus), this protein is Redox-sensing transcriptional repressor Rex.